We begin with the raw amino-acid sequence, 123 residues long: Omega-oxotoxin-Ot1a (123 aa).

Positions 1-16 (MKIVLVFVCTLYLAQA) are cleaved as a signal peptide. A propeptide spanning residues 17–54 (TYLSEQDVNEVSEFLEALDQANEAASEMVEAAETEEAR) is cleaved from the precursor. Positions 55–122 (DWECLPLHSS…GKINTCDKYK (68 aa)) constitute an Oxytoxin-type inhibitor cystine knot (ICK) domain. 5 cysteine pairs are disulfide-bonded: Cys-58–Cys-72, Cys-65–Cys-77, Cys-69–Cys-118, Cys-71–Cys-106, and Cys-79–Cys-104.

It belongs to the spiderine family. Spiderine subfamily. In terms of processing, mass spectrometry data suggest a carboxylated free C-terminal residue. As to expression, expressed by the venom gland.

Its subcellular location is the secreted. Functionally, weak blocker of vertebrate P/Q-, N- and L-type voltage-gated calcium channels (Cav1 and Cav2). Is both paralytic and lethal when injected into lepidopteran larvae. Is not toxic to mice. The chain is Omega-oxotoxin-Ot1a from Oxyopes takobius (Lynx spider).